The chain runs to 467 residues: Uronate isomerase (467 aa).

The protein belongs to the metallo-dependent hydrolases superfamily. Uronate isomerase family.

It catalyses the reaction D-glucuronate = D-fructuronate. The catalysed reaction is aldehydo-D-galacturonate = keto-D-tagaturonate. It participates in carbohydrate metabolism; pentose and glucuronate interconversion. In Mannheimia succiniciproducens (strain KCTC 0769BP / MBEL55E), this protein is Uronate isomerase.